We begin with the raw amino-acid sequence, 100 residues long: Urease subunit gamma (100 aa).

It belongs to the urease gamma subunit family. In terms of assembly, heterotrimer of UreA (gamma), UreB (beta) and UreC (alpha) subunits. Three heterotrimers associate to form the active enzyme.

It is found in the cytoplasm. It carries out the reaction urea + 2 H2O + H(+) = hydrogencarbonate + 2 NH4(+). It participates in nitrogen metabolism; urea degradation; CO(2) and NH(3) from urea (urease route): step 1/1. The protein is Urease subunit gamma of Chelativorans sp. (strain BNC1).